A 402-amino-acid polypeptide reads, in one-letter code: Deoxyguanosinetriphosphate triphosphohydrolase-like protein (402 aa).

Residues 20-39 (PAFSRGRLVPEPESPTRTPF) are disordered. One can recognise an HD domain in the interval 73–217 (RLTHTIEVAQ…AAIADDIAYN (145 aa)).

Belongs to the dGTPase family. Type 2 subfamily.

The polypeptide is Deoxyguanosinetriphosphate triphosphohydrolase-like protein (Brucella ovis (strain ATCC 25840 / 63/290 / NCTC 10512)).